We begin with the raw amino-acid sequence, 621 residues long: Pentatricopeptide repeat-containing protein At1g12620 (621 aa).

16 PPR repeats span residues 36–70, 71–105, 106–140, 141–175, 176–210, 211–245, 246–280, 281–315, 316–350, 351–385, 386–420, 421–455, 456–490, 491–525, 526–560, and 561–595; these read GKVSYRERLRSGIVDIKEDDAVDLFQEMTRSRPRP, RLIDFSRLFSVVARTKQYDLVLDLCKQMELKGIAH, NLYTLSIMINCCCRCRKLSLAFSAMGKIIKLGYEP, DTVTFSTLINGLCLEGRVSEALELVDRMVEMGHKP, TLITLNALVNGLCLNGKVSDAVLLIDRMVETGFQP, NEVTYGPVLKVMCKSGQTALAMELLRKMEERKIKL, DAVKYSIIIDGLCKDGSLDNAFNLFNEMEIKGFKA, DIIIYTTLIRGFCYAGRWDDGAKLLRDMIKRKITP, DVVAFSALIDCFVKEGKLREAEELHKEMIQRGISP, DTVTYTSLIDGFCKENQLDKANHMLDLMVSKGCGP, NIRTFNILINGYCKANLIDDGLELFRKMSLRGVVA, DTVTYNTLIQGFCELGKLEVAKELFQEMVSRRVRP, DIVSYKILLDGLCDNGEPEKALEIFEKIEKSKMEL, DIGIYNIIIHGMCNASKVDDAWDLFCSLPLKGVKP, DVKTYNIMIGGLCKKGSLSEADLLFRKMEEDGHSP, and NGCTYNILIRAHLGEGDATKSAKLIEEIKRCGFSV.

It belongs to the PPR family. P subfamily.

This is Pentatricopeptide repeat-containing protein At1g12620 from Arabidopsis thaliana (Mouse-ear cress).